The following is a 257-amino-acid chain: 1-(5-phosphoribosyl)-5-[(5-phosphoribosylamino)methylideneamino] imidazole-4-carboxamide isomerase (257 aa).

D8 acts as the Proton acceptor in catalysis. Residue D129 is the Proton donor of the active site.

It belongs to the HisA/HisF family.

It is found in the cytoplasm. It carries out the reaction 1-(5-phospho-beta-D-ribosyl)-5-[(5-phospho-beta-D-ribosylamino)methylideneamino]imidazole-4-carboxamide = 5-[(5-phospho-1-deoxy-D-ribulos-1-ylimino)methylamino]-1-(5-phospho-beta-D-ribosyl)imidazole-4-carboxamide. It functions in the pathway amino-acid biosynthesis; L-histidine biosynthesis; L-histidine from 5-phospho-alpha-D-ribose 1-diphosphate: step 4/9. In Trichormus variabilis (strain ATCC 29413 / PCC 7937) (Anabaena variabilis), this protein is 1-(5-phosphoribosyl)-5-[(5-phosphoribosylamino)methylideneamino] imidazole-4-carboxamide isomerase.